The sequence spans 255 residues: Aquaporin TIP4-1 (255 aa).

Helical transmembrane passes span alanine 25–methionine 45 and threonine 61–phenylalanine 81. An NPA 1 motif is present at residues asparagine 89–alanine 91. Helical transmembrane passes span valine 108–leucine 128, glycine 148–leucine 168, and alanine 176–phenylalanine 196. An NPA 2 motif is present at residues asparagine 202–alanine 204. A helical membrane pass occupies residues tryptophan 223–valine 243.

The protein belongs to the MIP/aquaporin (TC 1.A.8) family. TIP (TC 1.A.8.10) subfamily.

It is found in the vacuole membrane. Aquaporins facilitate the transport of water and small neutral solutes across cell membranes. In Zea mays (Maize), this protein is Aquaporin TIP4-1 (TIP4-1).